Here is a 388-residue protein sequence, read N- to C-terminus: Glycoprotein-N-acetylgalactosamine 3-beta-galactosyltransferase 1 (388 aa).

The Cytoplasmic portion of the chain corresponds to 1–12 (MAPISHYIGKTS). Residues 13 to 30 (LTTLAIGIAIGITVSNIV) traverse the membrane as a helical; Signal-anchor for type II membrane protein segment. Residues 31–388 (KFSSTQRRHF…LAQTDSKHIS (358 aa)) lie on the Lumenal side of the membrane. Positions 43–65 (SGYIPDSPHSHGENDFVEGPDDS) are disordered. Asparagine 80 is a glycosylation site (N-linked (GlcNAc...) asparagine). Cysteine 95 and cysteine 119 are disulfide-bonded. Residues methionine 98, asparagine 100, glutamate 142, glycine 143, arginine 144, lysine 150, and aspartate 173 each contribute to the UDP site. Residues aspartate 173 and aspartate 175 each coordinate Mn(2+). The cysteines at positions 238 and 253 are disulfide-linked. Residue tryptophan 292 participates in a glycoprotein binding. Cysteine 307 and cysteine 308 are joined by a disulfide. Residues histidine 316 and tyrosine 317 each coordinate UDP. Histidine 316 is a Mn(2+) binding site. The disordered stretch occupies residues 344 to 388 (STEEQDHGSSHKDTDAMKPEGKGMEDKEDEETNISLAQTDSKHIS). A compositionally biased stretch (basic and acidic residues) spans 347–368 (EQDHGSSHKDTDAMKPEGKGME). The N-linked (GlcNAc...) asparagine glycan is linked to asparagine 376.

It belongs to the glycosyltransferase 31 family. Beta3-Gal-T subfamily. In terms of assembly, homodimer; disulfide-linked. Requires Mn(2+) as cofactor.

The protein resides in the membrane. It carries out the reaction an N-acetyl-alpha-D-galactosaminyl derivative + UDP-alpha-D-galactose = a beta-D-galactosyl-(1-&gt;3)-N-acetyl-alpha-D-galactosaminyl derivative + UDP + H(+). The protein operates within protein modification; protein glycosylation. In terms of biological role, glycosyltransferase that generates the core 1 O-glycan Gal-beta1-3GalNAc-alpha1-Ser/Thr (T antigen), which is a precursor for many extended O-glycans in glycoproteins. In Biomphalaria glabrata (Bloodfluke planorb), this protein is Glycoprotein-N-acetylgalactosamine 3-beta-galactosyltransferase 1.